A 736-amino-acid polypeptide reads, in one-letter code: DNA topoisomerase 1 (736 aa).

The region spanning 2-113 (KHLIIVESPA…SYPRIVFHEI (112 aa)) is the Toprim domain. 2 residues coordinate Mg(2+): Glu8 and Asp82. One can recognise a Topo IA-type catalytic domain in the interval 129–552 (DMSKVNAQQA…DFYYPFMDKI (424 aa)). The interval 163–168 (SAGRVQ) is interaction with DNA. Catalysis depends on Tyr297, which acts as the O-(5'-phospho-DNA)-tyrosine intermediate. 4 consecutive C4-type zinc fingers follow at residues 572-598 (CPKC…YPKC), 616-642 (CEKC…YPEC), 663-689 (CPEC…YPKC), and 702-725 (CEKC…CIKC).

This sequence belongs to the type IA topoisomerase family. In terms of assembly, monomer. The cofactor is Mg(2+).

It catalyses the reaction ATP-independent breakage of single-stranded DNA, followed by passage and rejoining.. Its function is as follows. Releases the supercoiling and torsional tension of DNA, which is introduced during the DNA replication and transcription, by transiently cleaving and rejoining one strand of the DNA duplex. Introduces a single-strand break via transesterification at a target site in duplex DNA. The scissile phosphodiester is attacked by the catalytic tyrosine of the enzyme, resulting in the formation of a DNA-(5'-phosphotyrosyl)-enzyme intermediate and the expulsion of a 3'-OH DNA strand. The free DNA strand then undergoes passage around the unbroken strand, thus removing DNA supercoils. Finally, in the religation step, the DNA 3'-OH attacks the covalent intermediate to expel the active-site tyrosine and restore the DNA phosphodiester backbone. In Helicobacter pylori (strain ATCC 700392 / 26695) (Campylobacter pylori), this protein is DNA topoisomerase 1.